The primary structure comprises 267 residues: 27 kDa primary mesenchyme-specific spicule protein (267 aa).

Positions Met-1 to Gly-16 are cleaved as a signal peptide. The tract at residues Glu-20–Gln-64 is 11 X 4 AA tandem repeats of G-[PQ]-G-[MQ]. Tandem repeats lie at residues Gly-21–Met-24, Gly-25–Met-28, Gly-29–Met-32, Gly-33–Met-36, Gly-37–Met-40, Gly-41–Met-44, Gly-45–Met-48, Gly-49–Met-52, Gly-53–Gln-56, Gly-57–Gln-60, and Gly-61–Gln-64. The tract at residues Met-44–Gly-68 is disordered. Residues Ile-79–Ser-220 form the C-type lectin domain. 2 cysteine pairs are disulfide-bonded: Cys-100–Cys-219 and Cys-197–Cys-211.

In terms of tissue distribution, expressed specifically in the micromere/primary mesenchyme cells (PMC) lineage. Produced uniformly and exclusively by PMCs through the early prism stage and this specificity is further restricted during skeletogenesis to a subpopulation of PMCs associated with the growing tips of the spicules.

Its subcellular location is the secreted. Functionally, may play a role in the regulation or execution of skeletal growth. In Strongylocentrotus purpuratus (Purple sea urchin), this protein is 27 kDa primary mesenchyme-specific spicule protein (PM27).